The following is a 142-amino-acid chain: Large ribosomal subunit protein uL11 (142 aa).

It belongs to the universal ribosomal protein uL11 family. Part of the ribosomal stalk of the 50S ribosomal subunit. Interacts with L10 and the large rRNA to form the base of the stalk. L10 forms an elongated spine to which L12 dimers bind in a sequential fashion forming a multimeric L10(L12)X complex. Post-translationally, one or more lysine residues are methylated.

Forms part of the ribosomal stalk which helps the ribosome interact with GTP-bound translation factors. This chain is Large ribosomal subunit protein uL11, found in Methylocella silvestris (strain DSM 15510 / CIP 108128 / LMG 27833 / NCIMB 13906 / BL2).